The chain runs to 739 residues: MSLMLEPNPTQIKEERIYAEMGLTDEEFAMVEKILGRLPNYTETGLFSVMWSEHCSYKNSKPVLRKFPTTGERVLQGPGEGAGIVDIGDNQAVVFKMESHNHPSAIEPYQGAATGVGGIIRDVFSMGARPVALLNSLRFGELQSPRVKYLFEEVVAGIAGYGNCIGIPTVGGEVQFDPCYEGNPLVNAMCVGLINHEDIKKGQAHGAGNTVMYVGASTGRDGIHGATFASEELSESSEAKRPAVQVGDPFMEKLLIEACLELIQSDALVGIQDMGAAGLTSSSAEMASKAGMGIEMYLDDVPQRETGMTPYEMMLSESQERMLIVVKKGREQEIVDLFEKYGLAAVTMGKVTEDKMLRLFHKGEMVAEVPADALAEEAPIYHKPSQEAAYFAEFQQMKMETPKVENYKETLFALLQQPTIASKEWVYDQYDYQVRTSTVVTPGSDAAVVRVRGTEKGLAMTTDCNSRYIYLDPEMGGKIAVAEAARNIVCSGGEPLAITDCLNFGNPEKPEIFWQIEKSVDGMSEACRTLQTPVIGGNVSMYNERSGEAVYPTPTVGMVGLVHDLKHVTTQEFKQAGDLVYVIGETKAEFGGSELQKMLHGKIFGQSPSIDLDVELKRQKQVLAAIQAGLVQSAHDVAEGGLAVAISESAIGANGLGATVKLDGEATAALFAESQSRFVITVKRENKEAFEKAVEAIQVGEVTNTNEVTIHNEENEVLLTANVDEMRKAWKGAIPCLLK.

Residue His54 is part of the active site. Tyr57 and Lys96 together coordinate ATP. A Mg(2+)-binding site is contributed by Glu98. Substrate contacts are provided by residues 99–102 and Arg121; that span reads SHNH. His100 acts as the Proton acceptor in catalysis. A Mg(2+)-binding site is contributed by Asp122. Gln245 contacts substrate. Position 273 (Asp273) interacts with Mg(2+). Residue 317-319 participates in substrate binding; that stretch reads ESQ. Asp500 and Gly537 together coordinate ATP. Position 538 (Asn538) interacts with Mg(2+). Ser540 lines the substrate pocket.

It belongs to the FGAMS family. As to quaternary structure, monomer. Part of the FGAM synthase complex composed of 1 PurL, 1 PurQ and 2 PurS subunits.

The protein localises to the cytoplasm. The enzyme catalyses N(2)-formyl-N(1)-(5-phospho-beta-D-ribosyl)glycinamide + L-glutamine + ATP + H2O = 2-formamido-N(1)-(5-O-phospho-beta-D-ribosyl)acetamidine + L-glutamate + ADP + phosphate + H(+). Its pathway is purine metabolism; IMP biosynthesis via de novo pathway; 5-amino-1-(5-phospho-D-ribosyl)imidazole from N(2)-formyl-N(1)-(5-phospho-D-ribosyl)glycinamide: step 1/2. In terms of biological role, part of the phosphoribosylformylglycinamidine synthase complex involved in the purines biosynthetic pathway. Catalyzes the ATP-dependent conversion of formylglycinamide ribonucleotide (FGAR) and glutamine to yield formylglycinamidine ribonucleotide (FGAM) and glutamate. The FGAM synthase complex is composed of three subunits. PurQ produces an ammonia molecule by converting glutamine to glutamate. PurL transfers the ammonia molecule to FGAR to form FGAM in an ATP-dependent manner. PurS interacts with PurQ and PurL and is thought to assist in the transfer of the ammonia molecule from PurQ to PurL. This Bacillus cereus (strain ATCC 10987 / NRS 248) protein is Phosphoribosylformylglycinamidine synthase subunit PurL.